A 950-amino-acid chain; its full sequence is MAASTGYVRLWAAARCWVLRRPLLAVTGGRVPSASGSWLRRGCRVCDTSTPWGGRVPMGGGQWRGLWDAGSRGGSDETSEGGVEDGATASSGEGPVVTALAPMTVPDVFPHLPLIAISRNPVFPRFIKIVEVKNKKLVELLRRKVRLAQPYVGVFLKRDDNNESDVVESLDEIYHTGTFAQIHEMQDLGDKLRMIVTGHRRIHISRQLEVEPEGLEPEAENKQKSRRKLKRGKKEVGDELGAKPQLEMVTEATSDTSKEVLMVEVENVAHEDFQVTEEVKALTAEIVKTIRDIIALNPLYRESVLQMMQAGQRVVDNPIYLSDMGAALTGAESHELQDVLEETNILKRLYKALSLLKKEFELSKLQQRLGREVEEKIKQTHRKYLLQEQLKIIKKELGLEKDDKDAIEEKFRERLKELVVPKHVMDVVDEELSKLALLDNHSSEFNVTRNYLDWLTSIPWGRQSDENLDLARAQSVLEEDHYGMEDVKKRVLEFIAVSQLRGSTQGKILCFHGPPGVGKTSIARSIARALGREYFRFSVGGMTDVAEIKGHRRTYVGAMPGKIIQCLKKTKTENPLVLIDEVDKIGRGYQGDPSSALLELLDPEQNANFLDHYLDVPVDLSKVLFICTANVTDTIPEPLRDRMEMINVSGYVAQEKLAIAERYLVPQARTLCGLDESKAQLSATVLTLLIKQYCRESGVRNLQKQVEKVLRKAAYKIVSGEAQTVHVTPENLQDFVGKPVFTVERMYDVTPPGVVMGLAWTAMGGSTLFVETSLRRPQPSGSKEDKDGSLEVTGQLGDVMKESARIAYTFARAFLMEQDPENDFLVTSHIHLHVPEGATPKDGPSAGCTIVTALLSLALGQPVLQNLAMTGEVSLTGKVLPVGGIKEKTIAAKRAGVTCIILPAENRKDFSDLAPFITEGLEVHFVEHYRDIFRIAFPLREHQEALAVER.

The transit peptide at 1 to 65 (MAASTGYVRL…VPMGGGQWRG (65 aa)) directs the protein to the mitochondrion. 2 disordered regions span residues 67–94 (WDAG…SGEG) and 212–243 (PEGL…LGAK). Residues 112-360 (LPLIAISRNP…KALSLLKKEF (249 aa)) form the Lon N-terminal domain. The span at 224–233 (KSRRKLKRGK) shows a compositional bias: basic residues. 513–520 (GPPGVGKT) serves as a coordination point for ATP. In terms of domain architecture, Lon proteolytic spans 749–939 (VTPPGVVMGL…RDIFRIAFPL (191 aa)). Catalysis depends on residues Ser-845 and Lys-888.

Belongs to the peptidase S16 family. Homohexamer. Organized in a ring with a central cavity. The ATP-binding and proteolytic domains (AP-domain) form a hexameric chamber, while the N-terminal domain is arranged as a trimer of dimers. DNA and RNA binding is stimulated by substrate and inhibited by ATP binding. Interacts with TWNK and mitochondrial DNA polymerase subunit POLG.

It localises to the mitochondrion matrix. It catalyses the reaction Hydrolysis of proteins in presence of ATP.. In terms of biological role, ATP-dependent serine protease that mediates the selective degradation of misfolded, unassembled or oxidatively damaged polypeptides as well as certain short-lived regulatory proteins in the mitochondrial matrix. Endogenous substrates include mitochondrial steroidogenic acute regulatory (StAR) protein, DELE1, helicase Twinkle (TWNK) and the large ribosomal subunit protein MRPL32/bL32m. MRPL32/bL32m is protected from degradation by LONP1 when it is bound to a nucleic acid (RNA), but TWNK is not. May also have a chaperone function in the assembly of inner membrane protein complexes. Participates in the regulation of mitochondrial gene expression and in the maintenance of the integrity of the mitochondrial genome. Binds to mitochondrial promoters and RNA in a single-stranded, site-specific, and strand-specific manner. May regulate mitochondrial DNA replication and/or gene expression using site-specific, single-stranded DNA binding to target the degradation of regulatory proteins binding to adjacent sites in mitochondrial promoters. This Rattus norvegicus (Rat) protein is Lon protease homolog, mitochondrial (Lonp1).